The following is a 121-amino-acid chain: Protein SNORC (121 aa).

The first 24 residues, 1-24 (MASCLALRVALLLISGVLAPAVLT), serve as a signal peptide directing secretion. At 25 to 92 (AEGPQEPDPT…QDGGSLGPGA (68 aa)) the chain is on the extracellular side. The interval 26-84 (EGPQEPDPTLWNEPIELPSGEGPLESTSHNQEFAVSGPPFPTSAPAPEDSTPPARVDQD) is disordered. The chain crosses the membrane as a helical span at residues 93–113 (IAAIVIAALLATCVVLALVVV). Over 114–121 (ALRKFSAS) the chain is Cytoplasmic.

In terms of assembly, interacts (via the extracellular domain) with FGF2. In terms of tissue distribution, expressed only in cartilage, including nasal, knee epiphyseal and rib tissues. In proliferation and hypertrophic chondrocytes, detected intracellulary and in the pericellular extracellular matrix. In primary spongiosa, detected only in the extracellular matrix.

It is found in the membrane. Its subcellular location is the cytoplasm. The protein localises to the secreted. The protein resides in the extracellular space. It localises to the extracellular matrix. Plays a role in the regulation of chondrocyte maturation and postnatal endochondral ossification. May inhibit cell growth stimulation induced by FGF2. The sequence is that of Protein SNORC from Mus musculus (Mouse).